Reading from the N-terminus, the 372-residue chain is Serine protease 44 (372 aa).

An N-terminal signal peptide occupies residues 1–25 (MAFQGCDCFGLLVWLLLLQTRLGKA). Over 26-351 (RMVPGTPSLS…KELSRASCWK (326 aa)) the chain is Extracellular. The interval 31–72 (TPSLSPLPSENGLDDSGVNPQERPLTGMPETSLPRKPGDSTR) is disordered. Residues 112–345 (IVGGRPAPAR…YRDWIIKELS (234 aa)) form the Peptidase S1 domain. Cys-137 and Cys-153 are disulfide-bonded. Catalysis depends on charge relay system residues His-152 and Asp-197. Asn-208 is a glycosylation site (N-linked (GlcNAc...) asparagine). 3 disulfides stabilise this stretch: Cys-231-Cys-303, Cys-262-Cys-283, and Cys-293-Cys-321. Ser-297 serves as the catalytic Charge relay system. A helical membrane pass occupies residues 352–372 (LSGFLVLSVCLVLHLAIVVAL).

Belongs to the peptidase S1 family. Testis-specific. Expressed by primary and secondary spermatocytes.

It is found in the membrane. Its subcellular location is the cytoplasm. Lacks protease activity in vitro. The sequence is that of Serine protease 44 from Mus musculus (Mouse).